We begin with the raw amino-acid sequence, 192 residues long: Adenylate kinase (192 aa).

Position 12–17 (12–17 (GSGKTT)) interacts with ATP. Residues 34 to 63 (STGDLLRAQVASGSELGKTIDSFISKGNLV) form an NMP region. Residues T35, R40, 61–63 (NLV), 88–91 (GYPR), and Q95 contribute to the AMP site. An LID region spans residues 130–136 (GRNRGAD). R131 contacts ATP. AMP contacts are provided by R133 and R145. Position 173 (R173) interacts with ATP.

Belongs to the adenylate kinase family. In terms of assembly, monomer.

The protein localises to the cytoplasm. It catalyses the reaction AMP + ATP = 2 ADP. The protein operates within purine metabolism; AMP biosynthesis via salvage pathway; AMP from ADP: step 1/1. Catalyzes the reversible transfer of the terminal phosphate group between ATP and AMP. Plays an important role in cellular energy homeostasis and in adenine nucleotide metabolism. The protein is Adenylate kinase of Campylobacter jejuni subsp. doylei (strain ATCC BAA-1458 / RM4099 / 269.97).